A 348-amino-acid polypeptide reads, in one-letter code: 3-isopropylmalate dehydrogenase (348 aa).

Gly76 to Glu87 provides a ligand contact to NAD(+). Arg94, Arg104, Arg132, and Asp217 together coordinate substrate. Asp217, Asp241, and Asp245 together coordinate Mg(2+). Residue Gly275–Asn287 participates in NAD(+) binding.

This sequence belongs to the isocitrate and isopropylmalate dehydrogenases family. LeuB type 1 subfamily. In terms of assembly, homodimer. Mg(2+) serves as cofactor. It depends on Mn(2+) as a cofactor.

It localises to the cytoplasm. It catalyses the reaction (2R,3S)-3-isopropylmalate + NAD(+) = 4-methyl-2-oxopentanoate + CO2 + NADH. The protein operates within amino-acid biosynthesis; L-leucine biosynthesis; L-leucine from 3-methyl-2-oxobutanoate: step 3/4. Catalyzes the oxidation of 3-carboxy-2-hydroxy-4-methylpentanoate (3-isopropylmalate) to 3-carboxy-4-methyl-2-oxopentanoate. The product decarboxylates to 4-methyl-2 oxopentanoate. The polypeptide is 3-isopropylmalate dehydrogenase (Staphylococcus aureus (strain bovine RF122 / ET3-1)).